A 177-amino-acid chain; its full sequence is Meiotically up-regulated gene 121 protein (177 aa).

The signal sequence occupies residues 1–23 (MKGFVVISRFILTLFILITPGLA). N121 carries N-linked (GlcNAc...) asparagine glycosylation.

It is found in the endoplasmic reticulum. Its subcellular location is the golgi apparatus. Its function is as follows. Has a role in meiosis. This chain is Meiotically up-regulated gene 121 protein (mug121), found in Schizosaccharomyces pombe (strain 972 / ATCC 24843) (Fission yeast).